The chain runs to 118 residues: Beta-2-microglobulin (118 aa).

Residues 1–20 (MARFVVLVLLGLLYLSHLDA) form the signal peptide. The Ig-like C1-type domain maps to 25-113 (PKVQVYSRHP…TTLSEPKVVK (89 aa)). A disulfide bond links cysteine 45 and cysteine 99.

This sequence belongs to the beta-2-microglobulin family. In terms of assembly, heterodimer of an alpha chain and a beta chain. Beta-2-microglobulin is the beta-chain of major histocompatibility complex class I molecules.

It localises to the secreted. Functionally, component of the class I major histocompatibility complex (MHC). Involved in the presentation of peptide antigens to the immune system. In Felis catus (Cat), this protein is Beta-2-microglobulin (B2M).